A 132-amino-acid polypeptide reads, in one-letter code: Protein NrdI (132 aa).

The protein belongs to the NrdI family.

Its function is as follows. Probably involved in ribonucleotide reductase function. The protein is Protein NrdI of Staphylococcus haemolyticus (strain JCSC1435).